The primary structure comprises 274 residues: Cytochrome c oxidase subunit 3 (274 aa).

At 1–15 (MTHQTHAYHMVNPSP) the chain is on the mitochondrial matrix side. Residues 16 to 34 (WPLTGALSALLMTSGLAMW) traverse the membrane as a helical segment. Residues 35–40 (FHFNSS) are Mitochondrial intermembrane-facing. A helical transmembrane segment spans residues 41–66 (MLLSLGMLTNLLTMYQWWRDIVREGT). The Mitochondrial matrix segment spans residues 67–72 (FQGHHT). The chain crosses the membrane as a helical span at residues 73–105 (SIVQKGLRYGMVLFIISEIFFFAGFFWAFYHSS). Over 106-128 (LAPTPELGGCWPPTGIHPLNPLE) the chain is Mitochondrial intermembrane. The helical transmembrane segment at 129–152 (VPLLNTAVLLASGVSITWAHHSLM) threads the bilayer. Over 153–155 (EGN) the chain is Mitochondrial matrix. Residues 156 to 183 (RVQMLQALLITITLGLYFTLLQASEYFE) form a helical membrane-spanning segment. Residues 184 to 190 (TSFTISD) are Mitochondrial intermembrane-facing. The helical transmembrane segment at 191–223 (GVYGSTFFMATGFHGLHVIIGSTFLTVCFFRQL) threads the bilayer. Residues 224-232 (SFHFTSNHH) are Mitochondrial matrix-facing. The chain crosses the membrane as a helical span at residues 233–256 (FGFEAAAWYWHFVDVVWLFLYVSI). At 257-274 (YWWGSYSFSIDPMQLTSN) the chain is on the mitochondrial intermembrane side.

Belongs to the cytochrome c oxidase subunit 3 family. Component of the cytochrome c oxidase (complex IV, CIV), a multisubunit enzyme composed of 14 subunits. The complex is composed of a catalytic core of 3 subunits MT-CO1, MT-CO2 and MT-CO3, encoded in the mitochondrial DNA, and 11 supernumerary subunits COX4I, COX5A, COX5B, COX6A, COX6B, COX6C, COX7A, COX7B, COX7C, COX8 and NDUFA4, which are encoded in the nuclear genome. The complex exists as a monomer or a dimer and forms supercomplexes (SCs) in the inner mitochondrial membrane with NADH-ubiquinone oxidoreductase (complex I, CI) and ubiquinol-cytochrome c oxidoreductase (cytochrome b-c1 complex, complex III, CIII), resulting in different assemblies (supercomplex SCI(1)III(2)IV(1) and megacomplex MCI(2)III(2)IV(2)).

It localises to the mitochondrion inner membrane. The enzyme catalyses 4 Fe(II)-[cytochrome c] + O2 + 8 H(+)(in) = 4 Fe(III)-[cytochrome c] + 2 H2O + 4 H(+)(out). Component of the cytochrome c oxidase, the last enzyme in the mitochondrial electron transport chain which drives oxidative phosphorylation. The respiratory chain contains 3 multisubunit complexes succinate dehydrogenase (complex II, CII), ubiquinol-cytochrome c oxidoreductase (cytochrome b-c1 complex, complex III, CIII) and cytochrome c oxidase (complex IV, CIV), that cooperate to transfer electrons derived from NADH and succinate to molecular oxygen, creating an electrochemical gradient over the inner membrane that drives transmembrane transport and the ATP synthase. Cytochrome c oxidase is the component of the respiratory chain that catalyzes the reduction of oxygen to water. Electrons originating from reduced cytochrome c in the intermembrane space (IMS) are transferred via the dinuclear copper A center (CU(A)) of subunit 2 and heme A of subunit 1 to the active site in subunit 1, a binuclear center (BNC) formed by heme A3 and copper B (CU(B)). The BNC reduces molecular oxygen to 2 water molecules using 4 electrons from cytochrome c in the IMS and 4 protons from the mitochondrial matrix. This chain is Cytochrome c oxidase subunit 3 (MT-CO3), found in Lemur catta (Ring-tailed lemur).